A 421-amino-acid chain; its full sequence is Bestrophin homolog 2 (421 aa).

Transmembrane regions (helical) follow at residues 28–48, 73–93, 239–259, and 275–295; these read IWKA…IISV, LSFI…VDRW, LMYP…SIIA, and VYFP…LKVI.

The protein belongs to the anion channel-forming bestrophin (TC 1.A.46) family. Calcium-sensitive chloride channel subfamily. In terms of assembly, forms oligomers.

It is found in the cell membrane. Forms chloride channels. In Caenorhabditis elegans, this protein is Bestrophin homolog 2 (best-2).